The chain runs to 1336 residues: MHIHSDLSLPQFEHASIDPPSYSPQKSSFEEKKHNFSITNKSLETLRSQESPCSTTFPVSDRKDALLNIPTVVDDEFQHTEELAGVSSWSDFFYLFHFSDIPLIFGTLIFTCLSAALEPLMTWTTGKVFDALSQYATSQITLGKMISLINFNSLLITIFGLASCVFSFGVRFLWQYLSAIAGKRARSLCFHVLSSKSSTFYSLTESKSGLVNSVDRCIQFYEKSISLPMFHIAENLAISLSCLIISFRYSWSLTLVVLASYPIIILVVGFINSFLSSAYEKDRKSSEKAASILEKSISAIQTVIFHSMQDTEYRYFADACSTSSKSFLRFSFLDAFQGGVSQFFLYSVFFQGLWFGNHLATTKRVNVGQVVTVFGSCLSVASSLQQILPAIPDLIKGKFSSHFIKTLCESHDPIEAAKRSAAKIKSISFERGFRFDNVSFAYPSRDENLFSLINVSVFIPFGELVHIIGPSGSGKSTFISLLLRYFSPTYGNIYLDDFPLEEIDEHVLGSTITLVCQQPVIFDMTIRENIIMRNENASESDFEEVCRLALVDEFALTFDQSYDTPCKEASLSGGQQQRIALARALLRDTEILILDEPTSALDPITKNLVMDAIRAHRKGKTTLVITHDMSQINNDELVLVIDKGHLIQRCARKELVLFEDFENNVSIDEKVLKEEADNPFILPNEESLLEKYWINYNESFSQLSRESLFTSLESPFTDIESPTIVSRRKIVEQRKLRMEKESFQETNVDQTFHLFDDKEHACSLTLIFKSIWKVKKLRWFFLLGLLTSLIQGASVPIFAYVISKCLNLFMQIDPSIGVAFWSSMVLVVAAGSGASYFFSHYIFSISAKIWCDHYRLLAVKVLFTQDQAWFDQIENYPLVLSKILVNNISDMRNMISSLIEEVFIAFTMAIIGIAWSFATGWRLAAVLVAVSPILCLTSRMFSYIYVSTERMCQDVVISTTSILHKTIVNLDTIKGYSVLSFFRENHKNSLRKSWEAFKRRAFWTSLGFAINNSLLYFVRALLFYCSSIFISKEFYTVEQMVQVLSLATFTLLMASTCIMSLPNVSASRIATSRVLKLSSLKPGNLHKSGYLKFPLVGKIEFDGVSFAYPDSERNHLALNNVSLSIEAREKVAIVGISGSGKSTLVELLRKTYPSEDIYIDGYPLTNIDTNWLLKKVAIVDQKPHLLGSTILESLLYGVDRDINSVMDALDKTYMTEVIQNLPNGLDTPLLEFSKNFSGGQIQRLAFARALLRNPRLLILDECTSALDSKSSLLLEKTIQNLSCTVLIITHQPSLMKLADRIIVMDSGIVKESGSFDELMNRHTHFWKLIHRGEWIE.

The segment at 1–29 (MHIHSDLSLPQFEHASIDPPSYSPQKSSF) is disordered. Over 1-91 (MHIHSDLSLP…ELAGVSSWSD (91 aa)) the chain is Cytoplasmic. Residues 92 to 112 (FFYLFHFSDIPLIFGTLIFTC) form a helical membrane-spanning segment. An ABC transmembrane type-1 1 domain is found at 104–396 (IFGTLIFTCL…ILPAIPDLIK (293 aa)). At 113–153 (LSAALEPLMTWTTGKVFDALSQYATSQITLGKMISLINFNS) the chain is on the extracellular side. Residues 154–174 (LLITIFGLASCVFSFGVRFLW) form a helical membrane-spanning segment. Residues 175 to 250 (QYLSAIAGKR…SCLIISFRYS (76 aa)) are Cytoplasmic-facing. Residues 251–271 (WSLTLVVLASYPIIILVVGFI) traverse the membrane as a helical segment. Over 272–778 (NSFLSSAYEK…KSIWKVKKLR (507 aa)) the chain is Extracellular. One can recognise an ABC transporter 1 domain in the interval 433-668 (FRFDNVSFAY…EDFENNVSID (236 aa)). Residues Asn-437 and Asn-454 are each glycosylated (N-linked (GlcNAc...) asparagine). 469–476 (GPSGSGKS) provides a ligand contact to ATP. 3 N-linked (GlcNAc...) asparagine glycosylation sites follow: Asn-536, Asn-664, and Asn-697. Residues 779 to 799 (WFFLLGLLTSLIQGASVPIFA) form a helical membrane-spanning segment. The ABC transmembrane type-1 2 domain maps to 781-1066 (FLLGLLTSLI…CIMSLPNVSA (286 aa)). Over 800 to 897 (YVISKCLNLF…ISDMRNMISS (98 aa)) the chain is Cytoplasmic. The chain crosses the membrane as a helical span at residues 898-918 (LIEEVFIAFTMAIIGIAWSFA). Residues 919–1336 (TGWRLAAVLV…KLIHRGEWIE (418 aa)) lie on the Extracellular side of the membrane. Asn-1011, Asn-1063, and Asn-1120 each carry an N-linked (GlcNAc...) asparagine glycan. The ABC transporter 2 domain maps to 1099 to 1331 (IEFDGVSFAY…HTHFWKLIHR (233 aa)). 1135–1142 (GISGSGKS) provides a ligand contact to ATP. 2 N-linked (GlcNAc...) asparagine glycosylation sites follow: Asn-1235 and Asn-1280.

It belongs to the ABC transporter superfamily. Alpha-factor sex pheromone exporter (TC 3.A.1.206) family.

Its subcellular location is the membrane. In terms of biological role, required in S.pombe M (minus) cells for production of M-factor pheromone. Involved in the transport of the farnesyl-derivation of the M-factor pheromone. This Schizosaccharomyces pombe (strain 972 / ATCC 24843) (Fission yeast) protein is Mating factor M secretion protein mam1 (mam1).